Reading from the N-terminus, the 645-residue chain is UPF0313 protein CLM_0251 (645 aa).

Residues 295–566 enclose the Radical SAM core domain; sequence AIKEVKFSIT…RMQRALLQFS (272 aa). [4Fe-4S] cluster contacts are provided by Cys-309, Cys-313, and Cys-316. The interval 598-645 is disordered; it reads NKPYKKSHKKNNAKNNNNHYNKNNNYNKNKDISKKNKKNSLSKHKKRK. Basic residues predominate over residues 600–609; sequence PYKKSHKKNN. Residues 610-624 are compositionally biased toward low complexity; it reads AKNNNNHYNKNNNYN. Residues 632–645 show a composition bias toward basic residues; sequence KNKKNSLSKHKKRK.

This sequence belongs to the UPF0313 family. Requires [4Fe-4S] cluster as cofactor.

The protein is UPF0313 protein CLM_0251 of Clostridium botulinum (strain Kyoto / Type A2).